The primary structure comprises 256 residues: GTP cyclohydrolase FolE2 (256 aa).

The protein belongs to the GTP cyclohydrolase IV family.

It catalyses the reaction GTP + H2O = 7,8-dihydroneopterin 3'-triphosphate + formate + H(+). It participates in cofactor biosynthesis; 7,8-dihydroneopterin triphosphate biosynthesis; 7,8-dihydroneopterin triphosphate from GTP: step 1/1. Functionally, converts GTP to 7,8-dihydroneopterin triphosphate. This Maridesulfovibrio salexigens (strain ATCC 14822 / DSM 2638 / NCIMB 8403 / VKM B-1763) (Desulfovibrio salexigens) protein is GTP cyclohydrolase FolE2.